Reading from the N-terminus, the 691-residue chain is DNA ligase (691 aa).

NAD(+) is bound by residues 53–57 (DSEYD), 102–103 (SL), and Glu135. The active-site N6-AMP-lysine intermediate is Lys137. NAD(+) is bound by residues Arg158, Glu195, Lys310, and Lys334. Cys428, Cys431, Cys446, and Cys452 together coordinate Zn(2+). The BRCT domain occupies 613 to 691 (SEGLPLDGQT…EEEFLVLVGE (79 aa)).

The protein belongs to the NAD-dependent DNA ligase family. LigA subfamily. The cofactor is Mg(2+). Mn(2+) is required as a cofactor.

The catalysed reaction is NAD(+) + (deoxyribonucleotide)n-3'-hydroxyl + 5'-phospho-(deoxyribonucleotide)m = (deoxyribonucleotide)n+m + AMP + beta-nicotinamide D-nucleotide.. Its function is as follows. DNA ligase that catalyzes the formation of phosphodiester linkages between 5'-phosphoryl and 3'-hydroxyl groups in double-stranded DNA using NAD as a coenzyme and as the energy source for the reaction. It is essential for DNA replication and repair of damaged DNA. The protein is DNA ligase of Psychrobacter cryohalolentis (strain ATCC BAA-1226 / DSM 17306 / VKM B-2378 / K5).